We begin with the raw amino-acid sequence, 144 residues long: Universal stress protein F (144 aa).

Belongs to the universal stress protein A family. As to quaternary structure, homodimer.

The protein is Universal stress protein F (uspF) of Escherichia coli (strain K12).